Here is a 372-residue protein sequence, read N- to C-terminus: tRNA-specific 2-thiouridylase MnmA (372 aa).

Residues 6 to 13 (AMSGGVDS) and L32 contribute to the ATP site. The active-site Nucleophile is the C101. C101 and C193 are disulfide-bonded. G125 serves as a coordination point for ATP. Residues 143–145 (KDQ) form an interaction with tRNA region. C193 (cysteine persulfide intermediate) is an active-site residue.

It belongs to the MnmA/TRMU family.

The protein resides in the cytoplasm. It carries out the reaction S-sulfanyl-L-cysteinyl-[protein] + uridine(34) in tRNA + AH2 + ATP = 2-thiouridine(34) in tRNA + L-cysteinyl-[protein] + A + AMP + diphosphate + H(+). Catalyzes the 2-thiolation of uridine at the wobble position (U34) of tRNA, leading to the formation of s(2)U34. The polypeptide is tRNA-specific 2-thiouridylase MnmA (Corynebacterium kroppenstedtii (strain DSM 44385 / JCM 11950 / CIP 105744 / CCUG 35717)).